The chain runs to 156 residues: ATP synthase subunit b (156 aa).

Residues 12–32 (IAFAIFVWFCVKYVWPPITAA) traverse the membrane as a helical segment.

Belongs to the ATPase B chain family. As to quaternary structure, F-type ATPases have 2 components, F(1) - the catalytic core - and F(0) - the membrane proton channel. F(1) has five subunits: alpha(3), beta(3), gamma(1), delta(1), epsilon(1). F(0) has three main subunits: a(1), b(2) and c(10-14). The alpha and beta chains form an alternating ring which encloses part of the gamma chain. F(1) is attached to F(0) by a central stalk formed by the gamma and epsilon chains, while a peripheral stalk is formed by the delta and b chains.

It localises to the cell inner membrane. Its function is as follows. F(1)F(0) ATP synthase produces ATP from ADP in the presence of a proton or sodium gradient. F-type ATPases consist of two structural domains, F(1) containing the extramembraneous catalytic core and F(0) containing the membrane proton channel, linked together by a central stalk and a peripheral stalk. During catalysis, ATP synthesis in the catalytic domain of F(1) is coupled via a rotary mechanism of the central stalk subunits to proton translocation. Functionally, component of the F(0) channel, it forms part of the peripheral stalk, linking F(1) to F(0). This is ATP synthase subunit b from Marinobacter nauticus (strain ATCC 700491 / DSM 11845 / VT8) (Marinobacter aquaeolei).